Here is a 750-residue protein sequence, read N- to C-terminus: Methylmalonyl-CoA mutase, mitochondrial (750 aa).

The N-terminal 32 residues, 1–32 (MLRVKNQLFLLSPHYLKQVKESSGSRLIRQRF), are a transit peptide targeting the mitochondrion. Gln50 is a malonyl-CoA binding site. Lys89 bears the N6-acetyllysine mark. Residues 96–99 (YPTM) and 106–110 (TIRQY) contribute to the malonyl-CoA site. The residue at position 212 (Lys212) is an N6-acetyllysine. Residues 216–218 (TIQ), Arg228, Lys255, His265, and 304–306 (RLS) each bind malonyl-CoA. Position 335 is an N6-acetyllysine (Lys335). Lys343 is modified (N6-succinyllysine). Ser481 carries the post-translational modification Phosphoserine. N6-succinyllysine is present on Lys595. Position 602 is an N6-acetyllysine (Lys602). The 133-residue stretch at 614–746 (RPRLLVAKMG…DDIEKCLEKK (133 aa)) folds into the B12-binding domain. His627 contributes to the adenosylcob(III)alamin binding site.

This sequence belongs to the methylmalonyl-CoA mutase family. In terms of assembly, homodimer. Interacts (the apoenzyme form) with MMAA; the interaction is GTP dependent. Requires adenosylcob(III)alamin as cofactor.

It localises to the mitochondrion matrix. Its subcellular location is the mitochondrion. The protein localises to the cytoplasm. It carries out the reaction (R)-methylmalonyl-CoA = succinyl-CoA. Inhibited by itaconyl-CoA, a metabolite that inactivates the coenzyme B12 cofactor. Functionally, catalyzes the reversible isomerization of methylmalonyl-CoA (MMCoA) (generated from branched-chain amino acid metabolism and degradation of dietary odd chain fatty acids and cholesterol) to succinyl-CoA (3-carboxypropionyl-CoA), a key intermediate of the tricarboxylic acid cycle. In Macaca fascicularis (Crab-eating macaque), this protein is Methylmalonyl-CoA mutase, mitochondrial (MMUT).